A 186-amino-acid polypeptide reads, in one-letter code: Negative modulator of initiation of replication (186 aa).

This sequence belongs to the SeqA family. Homodimer. Polymerizes to form helical filaments.

It localises to the cytoplasm. Negative regulator of replication initiation, which contributes to regulation of DNA replication and ensures that replication initiation occurs exactly once per chromosome per cell cycle. Binds to pairs of hemimethylated GATC sequences in the oriC region, thus preventing assembly of replication proteins and re-initiation at newly replicated origins. Repression is relieved when the region becomes fully methylated. This Haemophilus ducreyi (strain 35000HP / ATCC 700724) protein is Negative modulator of initiation of replication.